We begin with the raw amino-acid sequence, 183 residues long: SsrA-binding protein (183 aa).

Residues 1 to 27 (MAKKATLVDHGAAKGKKKAQSKVSKKN) are disordered. Positions 13-27 (AKGKKKAQSKVSKKN) are enriched in basic residues.

It belongs to the SmpB family.

The protein localises to the cytoplasm. Its function is as follows. Required for rescue of stalled ribosomes mediated by trans-translation. Binds to transfer-messenger RNA (tmRNA), required for stable association of tmRNA with ribosomes. tmRNA and SmpB together mimic tRNA shape, replacing the anticodon stem-loop with SmpB. tmRNA is encoded by the ssrA gene; the 2 termini fold to resemble tRNA(Ala) and it encodes a 'tag peptide', a short internal open reading frame. During trans-translation Ala-aminoacylated tmRNA acts like a tRNA, entering the A-site of stalled ribosomes, displacing the stalled mRNA. The ribosome then switches to translate the ORF on the tmRNA; the nascent peptide is terminated with the 'tag peptide' encoded by the tmRNA and targeted for degradation. The ribosome is freed to recommence translation, which seems to be the essential function of trans-translation. The protein is SsrA-binding protein of Corynebacterium kroppenstedtii (strain DSM 44385 / JCM 11950 / CIP 105744 / CCUG 35717).